We begin with the raw amino-acid sequence, 273 residues long: Phosphate import ATP-binding protein PstB (273 aa).

Positions 18–257 (ISLQNVTISY…EFDKTKKIFN (240 aa)) constitute an ABC transporter domain. 50–57 (GPSGCGKS) serves as a coordination point for ATP.

This sequence belongs to the ABC transporter superfamily. Phosphate importer (TC 3.A.1.7) family. As to quaternary structure, the complex is composed of two ATP-binding proteins (PstB), two transmembrane proteins (PstC and PstA) and a solute-binding protein (PstS).

Its subcellular location is the cell inner membrane. It catalyses the reaction phosphate(out) + ATP + H2O = ADP + 2 phosphate(in) + H(+). Its function is as follows. Part of the ABC transporter complex PstSACB involved in phosphate import. Responsible for energy coupling to the transport system. This is Phosphate import ATP-binding protein PstB from Prochlorococcus marinus (strain SARG / CCMP1375 / SS120).